Here is a 156-residue protein sequence, read N- to C-terminus: Transcription antitermination protein NusB (156 aa).

Belongs to the NusB family.

Involved in transcription antitermination. Required for transcription of ribosomal RNA (rRNA) genes. Binds specifically to the boxA antiterminator sequence of the ribosomal RNA (rrn) operons. The polypeptide is Transcription antitermination protein NusB (Rickettsia felis (strain ATCC VR-1525 / URRWXCal2) (Rickettsia azadi)).